We begin with the raw amino-acid sequence, 435 residues long: Enolase (435 aa).

Residue Q163 coordinates (2R)-2-phosphoglycerate. E205 serves as the catalytic Proton donor. Residues D243, E292, and D319 each contribute to the Mg(2+) site. Positions 344, 373, 374, and 395 each coordinate (2R)-2-phosphoglycerate. The Proton acceptor role is filled by K344.

It belongs to the enolase family. Mg(2+) is required as a cofactor.

It localises to the cytoplasm. The protein localises to the secreted. The protein resides in the cell surface. The catalysed reaction is (2R)-2-phosphoglycerate = phosphoenolpyruvate + H2O. The protein operates within carbohydrate degradation; glycolysis; pyruvate from D-glyceraldehyde 3-phosphate: step 4/5. Functionally, catalyzes the reversible conversion of 2-phosphoglycerate (2-PG) into phosphoenolpyruvate (PEP). It is essential for the degradation of carbohydrates via glycolysis. The chain is Enolase from Streptococcus agalactiae serotype Ia (strain ATCC 27591 / A909 / CDC SS700).